Consider the following 221-residue polypeptide: MTSLSKEAVLVHAALEERGLETPLRGEVLDRETRKRRIKEHMTEIMQLLNLDLSDDSLAETPHRIAKMYVDEIFSGLDYANFPKITVIENKMKVDEMVTVRDITLTSTCEHHFVTIDGKATVAYIPKDAVIGLSKINRIVQFFSQRPQVQERLTQQILVALQTLLGTNNVAVSIDAVHYCVKARGIRDATSATTTTSLGGLFKSSQNTRQEFLRAVRHHQG.

Zn(2+)-binding residues include Cys-109, His-112, and Cys-180.

It belongs to the GTP cyclohydrolase I family. Toroid-shaped homodecamer, composed of two pentamers of five dimers.

The catalysed reaction is GTP + H2O = 7,8-dihydroneopterin 3'-triphosphate + formate + H(+). The protein operates within cofactor biosynthesis; 7,8-dihydroneopterin triphosphate biosynthesis; 7,8-dihydroneopterin triphosphate from GTP: step 1/1. The chain is GTP cyclohydrolase 1 from Serratia proteamaculans (strain 568).